The chain runs to 158 residues: NAD(P)H-quinone oxidoreductase subunit J, chloroplastic (158 aa).

It belongs to the complex I 30 kDa subunit family. As to quaternary structure, NDH is composed of at least 16 different subunits, 5 of which are encoded in the nucleus.

It is found in the plastid. The protein localises to the chloroplast thylakoid membrane. It catalyses the reaction a plastoquinone + NADH + (n+1) H(+)(in) = a plastoquinol + NAD(+) + n H(+)(out). The catalysed reaction is a plastoquinone + NADPH + (n+1) H(+)(in) = a plastoquinol + NADP(+) + n H(+)(out). Its function is as follows. NDH shuttles electrons from NAD(P)H:plastoquinone, via FMN and iron-sulfur (Fe-S) centers, to quinones in the photosynthetic chain and possibly in a chloroplast respiratory chain. The immediate electron acceptor for the enzyme in this species is believed to be plastoquinone. Couples the redox reaction to proton translocation, and thus conserves the redox energy in a proton gradient. The sequence is that of NAD(P)H-quinone oxidoreductase subunit J, chloroplastic from Coffea arabica (Arabian coffee).